Here is a 497-residue protein sequence, read N- to C-terminus: TBC1 domain family member 22A (497 aa).

The interval 83 to 147 (RNHSQRQGRP…DAAPLQRSQS (65 aa)) is disordered. 3 positions are modified to phosphoserine: serine 112, serine 125, and serine 147. In terms of domain architecture, Rab-GAP TBC spans 202–426 (GIPKPVRPMT…RLWDTYQSEP (225 aa)).

Homodimer. Interacts with ACBD3 and ARFGEF1. Interacts with YWHAB, YWHAE, YWHAG, YWHAH, YWHAQ and YWHAZ.

May act as a GTPase-activating protein for Rab family protein(s). This Macaca fascicularis (Crab-eating macaque) protein is TBC1 domain family member 22A (TBC1D22A).